The primary structure comprises 226 residues: CRISPR-associated endonuclease Cas3-HD (226 aa).

Residues 9–204 (GRDCLQTYED…HVLTVCDNWG (196 aa)) enclose the HD Cas3-type domain. Residues Asp56, His74, His101, and His102 each contribute to the Mg(2+) site.

It belongs to the CRISPR-associated nuclease Cas3-HD family. As to quaternary structure, monomer. Can form a Cascade complex with Csa5, Cas7, Cas5a, Cas3 and Cas8a2. Mg(2+) serves as cofactor.

Functionally, CRISPR (clustered regularly interspaced short palindromic repeat), is an adaptive immune system that provides protection against mobile genetic elements (viruses, transposable elements and conjugative plasmids). CRISPR clusters contain sequences complementary to antecedent mobile elements and target invading nucleic acids. CRISPR clusters are transcribed and processed into CRISPR RNA (crRNA). Cas3 plus Cascade participate in CRISPR interference, the third stage of CRISPR immunity. Acts as a ssDNA and ssRNA nuclease, probably with both exo- and endonuclease activities. Activity is higher for DNA than RNA. The protein is CRISPR-associated endonuclease Cas3-HD (cas3') of Thermoproteus tenax (strain ATCC 35583 / DSM 2078 / JCM 9277 / NBRC 100435 / Kra 1).